We begin with the raw amino-acid sequence, 259 residues long: Putative zinc metalloprotease Rip2 (259 aa).

2 helical membrane passes run 14-34 (PIFL…WLAG) and 39-59 (PLAY…SLCL). Position 60 (His60) interacts with Zn(2+). Glu61 is an active-site residue. His64 is a binding site for Zn(2+). The next 4 membrane-spanning stretches (helical) occupy residues 97-117 (GLPM…AVYV), 128-148 (TLVS…LLAA), 156-176 (IHAV…TALV), and 211-231 (LVFL…FGVV).

This sequence belongs to the peptidase M50B family. The cofactor is Zn(2+).

It localises to the cell membrane. The sequence is that of Putative zinc metalloprotease Rip2 (rip2) from Mycobacterium tuberculosis (strain ATCC 25618 / H37Rv).